A 356-amino-acid chain; its full sequence is A-type ATP synthase subunit C (356 aa).

This sequence belongs to the V-ATPase V0D/AC39 subunit family. In terms of assembly, has multiple subunits with at least A(3), B(3), C, D, E, F, H, I and proteolipid K(x).

The protein localises to the cell membrane. In terms of biological role, component of the A-type ATP synthase that produces ATP from ADP in the presence of a proton gradient across the membrane. The protein is A-type ATP synthase subunit C of Thermoplasma volcanium (strain ATCC 51530 / DSM 4299 / JCM 9571 / NBRC 15438 / GSS1).